Consider the following 230-residue polypeptide: Urease accessory protein UreE (230 aa).

Residues 197 to 230 (LHIHAIHSHGDGDSHNHDHDHSHSHGDHDHDHKH) form a disordered region. Over residues 204 to 230 (SHGDGDSHNHDHDHSHSHGDHDHDHKH) the composition is skewed to basic and acidic residues.

The protein belongs to the UreE family.

Its subcellular location is the cytoplasm. In terms of biological role, involved in urease metallocenter assembly. Binds nickel. Probably functions as a nickel donor during metallocenter assembly. This chain is Urease accessory protein UreE, found in Yersinia aldovae.